The primary structure comprises 934 residues: Sorting nexin-14 (934 aa).

2 helical membrane passes run 27-47 (YPVI…LNQY) and 48-68 (LHIL…YCSL). Positions 129-303 (PSKVDASISE…MVLIFIDDSP (175 aa)) constitute a PXA domain. The RGS domain occupies 335-467 (DLKEIREQQD…CHSDEYFRHL (133 aa)). Residues 557 to 677 (WTISIPYVDF…DFLSPFSMES (121 aa)) enclose the PX domain.

This sequence belongs to the sorting nexin family.

It is found in the lysosome membrane. The protein resides in the late endosome membrane. Its subcellular location is the cell projection. It localises to the dendrite. Plays a role in maintaining normal neuronal excitability and synaptic transmission. May be involved in several stages of intracellular trafficking. Required for autophagosome clearance, possibly by mediating the fusion of lysosomes with autophagosomes. Binds phosphatidylinositol 3,5-bisphosphate (PtdIns(3,5)P2), a key component of late endosomes/lysosomes. Does not bind phosphatidylinositol 3-phosphate (PtdIns(3P)). In Danio rerio (Zebrafish), this protein is Sorting nexin-14.